Consider the following 393-residue polypeptide: Cysteine protease ATG4B (393 aa).

Methionine 1 carries the post-translational modification N-acetylmethionine. Phosphoserine is present on serine 34. Cysteine 74 serves as the catalytic Nucleophile. Cysteine 189 carries the S-nitrosocysteine modification. Catalysis depends on residues aspartate 278 and histidine 280. 2 positions are modified to S-nitrosocysteine: cysteine 292 and cysteine 301. Cysteine 292 and cysteine 361 are oxidised to a cystine. 2 positions are modified to phosphoserine: serine 316 and serine 383. Positions 388 to 391 (FEIL) match the LIR motif. Residue serine 392 is modified to Phosphoserine.

This sequence belongs to the peptidase C54 family. In terms of assembly, interacts with PFKP; promoting phosphorylation of ATG4B at Ser-34. Interacts with GBP7. Phosphorylation at Ser-383 and Ser-392 promotes autophagy by increasing protein delipidation activity without affecting proteolytic activation of ATG8 proteins. Phosphorylation at Ser-316 by ULK1 inhibits autophagy by decreasing both proteolytic activation and delipidation activities. Phosphorylation at Ser-316 is dephosphorylated by protein phosphatase 2A (PP2A). Phosphorylation at Ser-34 by AKT2 promotes its hydrolase activity, leading to increased proteolytic activation and delipidation of ATG8 family proteins. Phosphorylation at Ser-34 by AKT1 promotes mitochondrial localization and inhibition of the F1F0-ATP synthase activity, leading to elevation of mitochondrial reactive oxygen species (ROS). Post-translationally, ubiquitinated by RNF5, leading to its degradation by the proteasome. In terms of processing, S-nitrosylation at Cys-189 and Cys-292 in response to high glucose decreases both proteolytic activation and delipidation activities. O-glycosylated by OGT, leading to increase protease activity, thereby promoting the proteolytic activation of ATG8 family proteins. Post-translationally, forms reversible intrachain disulfide bonds in response to oxidative stress. Forms interchain disulfide bonds, leading to formation of homooligomers in response to oxidation.

Its subcellular location is the cytoplasm. The protein localises to the cytosol. The protein resides in the cytoplasmic vesicle. It localises to the autophagosome. It is found in the endoplasmic reticulum. Its subcellular location is the mitochondrion. It carries out the reaction [protein]-C-terminal L-amino acid-glycyl-phosphatidylethanolamide + H2O = [protein]-C-terminal L-amino acid-glycine + a 1,2-diacyl-sn-glycero-3-phosphoethanolamine. The catalysed reaction is [protein]-C-terminal L-amino acid-glycyl-phosphatidylserine + H2O = [protein]-C-terminal L-amino acid-glycine + a 1,2-diacyl-sn-glycero-3-phospho-L-serine. With respect to regulation, inhibited by N-ethylmaleimide. Redox-regulated during autophagy since reducing conditions activate ATG4A whereas an oxidizing environment such as the presence of H(2)O(2) inhibits its activity. The cysteine protease activity compounds is inhibited by styrylquinoline compounds 4-28 and LV-320. In terms of biological role, cysteine protease that plays a key role in autophagy by mediating both proteolytic activation and delipidation of ATG8 family proteins. Required for canonical autophagy (macroautophagy), non-canonical autophagy as well as for mitophagy. The protease activity is required for proteolytic activation of ATG8 family proteins: cleaves the C-terminal amino acid of ATG8 proteins MAP1LC3A, MAP1LC3B, MAP1LC3C, GABARAPL1, GABARAPL2 and GABARAP, to reveal a C-terminal glycine. Exposure of the glycine at the C-terminus is essential for ATG8 proteins conjugation to phosphatidylethanolamine (PE) and insertion to membranes, which is necessary for autophagy. Protease activity is also required to counteract formation of high-molecular weight conjugates of ATG8 proteins (ATG8ylation): acts as a deubiquitinating-like enzyme that removes ATG8 conjugated to other proteins, such as ATG3. In addition to the protease activity, also mediates delipidation of ATG8 family proteins. Catalyzes delipidation of PE-conjugated forms of ATG8 proteins during macroautophagy. Also involved in non-canonical autophagy, a parallel pathway involving conjugation of ATG8 proteins to single membranes at endolysosomal compartments, by catalyzing delipidation of ATG8 proteins conjugated to phosphatidylserine (PS). Compared to other members of the family (ATG4A, ATG4C or ATG4C), constitutes the major protein for proteolytic activation of ATG8 proteins, while it displays weaker delipidation activity than other ATG4 paralogs. Involved in phagophore growth during mitophagy independently of its protease activity and of ATG8 proteins: acts by regulating ATG9A trafficking to mitochondria and promoting phagophore-endoplasmic reticulum contacts during the lipid transfer phase of mitophagy. The protein is Cysteine protease ATG4B of Mus musculus (Mouse).